A 335-amino-acid polypeptide reads, in one-letter code: DNA polymerase beta (335 aa).

Residue Lys-41 forms a Glycyl lysine isopeptide (Lys-Gly) (interchain with G-Cter in ubiquitin) linkage. Lys-60 contacts K(+). Residue Lys-60 participates in Na(+) binding. A Glycyl lysine isopeptide (Lys-Gly) (interchain with G-Cter in ubiquitin) cross-link involves residue Lys-61. K(+)-binding residues include Leu-62 and Val-65. Na(+)-binding residues include Leu-62 and Val-65. Lys-72 acts as the Nucleophile; Schiff-base intermediate with DNA; for 5'-dRP lyase activity in catalysis. The residue at position 72 (Lys-72) is an N6-acetyllysine. Lys-81 participates in a covalent cross-link: Glycyl lysine isopeptide (Lys-Gly) (interchain with G-Cter in ubiquitin). Residue Arg-83 is modified to Omega-N-methylarginine; by PRMT6. The K(+) site is built by Thr-101, Val-103, and Ile-106. Na(+)-binding residues include Thr-101, Val-103, and Ile-106. Arg-149 contributes to the a 2'-deoxyribonucleoside 5'-triphosphate binding site. Arg-152 bears the Omega-N-methylarginine; by PRMT6 mark. A 2'-deoxyribonucleoside 5'-triphosphate contacts are provided by Ser-180, Arg-183, Gly-189, and Asp-190. The tract at residues 183-192 (RGAESSGDMD) is DNA-binding. The Mg(2+) site is built by Asp-190, Asp-192, and Asp-256.

Belongs to the DNA polymerase type-X family. As to quaternary structure, monomer. Binds single-stranded DNA (ssDNA). Interacts with APEX1, LIG1, LIG3, FEN1, PCNA and XRCC1. Interacts with HUWE1/ARF-BP1, STUB1/CHIP and USP47. Interacts with FAM168A. Requires Mg(2+) as cofactor. Methylation by PRMT6 stimulates the polymerase activity by enhancing DNA binding and processivity. Post-translationally, ubiquitinated at Lys-41, Lys-61 and Lys-81: monoubiquitinated by HUWE1/ARF-BP1. Monoubiquitinated protein is then the target of STUB1/CHIP, which catalyzes polyubiquitination from monoubiquitin, leading to degradation by the proteasome. USP47 mediates the deubiquitination of monoubiquitinated protein, preventing polyubiquitination by STUB1/CHIP and its subsequent degradation.

The protein resides in the nucleus. It is found in the cytoplasm. It carries out the reaction DNA(n) + a 2'-deoxyribonucleoside 5'-triphosphate = DNA(n+1) + diphosphate. The enzyme catalyses a 5'-end 2'-deoxyribose-2'-deoxyribonucleotide-DNA = (2E,4S)-4-hydroxypenten-2-al-5-phosphate + a 5'-end 5'-phospho-2'-deoxyribonucleoside-DNA + H(+). The catalysed reaction is 2'-deoxyribonucleotide-(2'-deoxyribose 5'-phosphate)-2'-deoxyribonucleotide-DNA = a 3'-end 2'-deoxyribonucleotide-(2,3-dehydro-2,3-deoxyribose 5'-phosphate)-DNA + a 5'-end 5'-phospho-2'-deoxyribonucleoside-DNA + H(+). Its function is as follows. Repair polymerase that plays a key role in base-excision repair. During this process, the damaged base is excised by specific DNA glycosylases, the DNA backbone is nicked at the abasic site by an apurinic/apyrimidic (AP) endonuclease, and POLB removes 5'-deoxyribose-phosphate from the preincised AP site acting as a 5'-deoxyribose-phosphate lyase (5'-dRP lyase); through its DNA polymerase activity, it adds one nucleotide to the 3' end of the arising single-nucleotide gap. Conducts 'gap-filling' DNA synthesis in a stepwise distributive fashion rather than in a processive fashion as for other DNA polymerases. It is also able to cleave sugar-phosphate bonds 3' to an intact AP site, acting as an AP lyase. This is DNA polymerase beta (Polb) from Rattus norvegicus (Rat).